The primary structure comprises 61 residues: Large ribosomal subunit protein bL32 (61 aa).

This sequence belongs to the bacterial ribosomal protein bL32 family.

This Acidithiobacillus ferrooxidans (strain ATCC 23270 / DSM 14882 / CIP 104768 / NCIMB 8455) (Ferrobacillus ferrooxidans (strain ATCC 23270)) protein is Large ribosomal subunit protein bL32.